The primary structure comprises 401 residues: Ascaroside receptor GPR3 (401 aa).

Topologically, residues 1 to 16 (MQPFGDAWSQRHLAGV) are extracellular. A helical transmembrane segment spans residues 17–37 (VLAGSVLSIVGSLYMILGFFF). The Cytoplasmic portion of the chain corresponds to 38–47 (LRECRSFRHK). Residues 48-68 (LILGLAVSDLLLALNFFIPSL) form a helical membrane-spanning segment. The Extracellular segment spans residues 69 to 93 (SMVTGREISSPWNEGFCSANGFLMQ). A disulfide bridge connects residues C85 and C159. A helical transmembrane segment spans residues 94–114 (LFFAQIDVWQISIALITLLML). Over 115 to 128 (SGPSMVLKWIRENV) the chain is Cytoplasmic. The helical transmembrane segment at 129–149 (WAVWLFPWLVSLIAAFFAFGF) threads the bilayer. Topologically, residues 150 to 175 (WDYANVGGFCWLGSRNIRLYFNYIPR) are extracellular. A helical transmembrane segment spans residues 176–196 (WIIILVCLVIYIAVYRLILHA). Residues 197 to 294 (RRRANIQKTY…QKQVRKIAIQ (98 aa)) are Cytoplasmic-facing. The segment at 206 to 259 (YRGRASDRAPPQPVTTTAPATNPESEKVNPDEISSGNGSSSLDTSRSGSSTGFT) is disordered. Residues 239 to 257 (SSGNGSSSLDTSRSGSSTG) are compositionally biased toward low complexity. A helical membrane pass occupies residues 295 to 315 (MISYPLAYAVLWAIPTIVMII). At 316–321 (QVARGG) the chain is on the extracellular side. Residues 322–342 (EGVSIHVEGLAKMLLVFNGFV) form a helical membrane-spanning segment. Residues 343-401 (DAHVYGFNERTAMGWRQRIRPAAQEDDEEAAGTSGGVHEVVSRPEPTLKNPNVWQQNMV) are Cytoplasmic-facing. Residues 362–401 (RPAAQEDDEEAAGTSGGVHEVVSRPEPTLKNPNVWQQNMV) form a disordered region. Residues 391–401 (KNPNVWQQNMV) show a composition bias toward polar residues.

The protein belongs to the G-protein coupled receptor 1 family. As to quaternary structure, interacts with ascaroside receptor GPR2; may form a functional heterodimer. Interacts with guanine nucleotide-binding protein alpha GPA2; to activate adenylate cyclase and positively regulate nematode trap formation.

It localises to the cell membrane. In terms of biological role, g protein-coupled receptor that senses nematode ascaroside pheromones and signals via adenylate cyclase to positively regulate trap formation for nematode capture. The sequence is that of Ascaroside receptor GPR3 from Arthrobotrys oligospora (strain ATCC 24927 / CBS 115.81 / DSM 1491) (Nematode-trapping fungus).